The primary structure comprises 462 residues: Dipeptidyl peptidase 1 (462 aa).

A signal peptide spans 1–24 (MGPWTHSLRAVLLLVLLGVCTVRS). Residues asparagine 29 and asparagine 53 are each glycosylated (N-linked (GlcNAc...) asparagine). Disulfide bonds link cysteine 30/cysteine 118, cysteine 54/cysteine 136, cysteine 254/cysteine 297, cysteine 290/cysteine 330, and cysteine 320/cysteine 336. Residues 135 to 230 (ACFVGKKVES…DEIQQQILNL (96 aa)) constitute a propeptide that is removed on maturation. Cysteine 257 is an active-site residue. Asparagine 275 carries N-linked (GlcNAc...) asparagine glycosylation. Chloride is bound by residues phenylalanine 301 and tyrosine 303. Residue tyrosine 346 participates in chloride binding. Residues histidine 404 and asparagine 426 contribute to the active site.

Belongs to the peptidase C1 family. As to quaternary structure, tetramer of heterotrimers consisting of exclusion domain, heavy- and light chains. Chloride is required as a cofactor. In terms of tissue distribution, broadly distributed, but higher levels found in lung, liver, kidney and spleen. Lower levels found in testis and brain.

It is found in the lysosome. It carries out the reaction Release of an N-terminal dipeptide, Xaa-Yaa-|-Zaa-, except when Xaa is Arg or Lys, or Yaa or Zaa is Pro.. In terms of biological role, thiol protease. Has dipeptidylpeptidase activity. Active against a broad range of dipeptide substrates composed of both polar and hydrophobic amino acids. Proline cannot occupy the P1 position and arginine cannot occupy the P2 position of the substrate. Can act as both an exopeptidase and endopeptidase. Activates serine proteases such as elastase, cathepsin G and granzymes A and B. In Mus musculus (Mouse), this protein is Dipeptidyl peptidase 1 (Ctsc).